The chain runs to 241 residues: Methylthioribulose-1-phosphate dehydratase (241 aa).

A compositionally biased stretch (polar residues) spans 1 to 17; that stretch reads MAKQVENNNNDHLVQST. Residues 1–21 form a disordered region; it reads MAKQVENNNNDHLVQSTDPEH. C100 contacts substrate. Zn(2+) is bound by residues H117 and H119. E146 serves as the catalytic Proton donor/acceptor. H202 is a binding site for Zn(2+).

This sequence belongs to the aldolase class II family. MtnB subfamily. It depends on Zn(2+) as a cofactor.

It is found in the cytoplasm. The enzyme catalyses 5-(methylsulfanyl)-D-ribulose 1-phosphate = 5-methylsulfanyl-2,3-dioxopentyl phosphate + H2O. The protein operates within amino-acid biosynthesis; L-methionine biosynthesis via salvage pathway; L-methionine from S-methyl-5-thio-alpha-D-ribose 1-phosphate: step 2/6. Catalyzes the dehydration of methylthioribulose-1-phosphate (MTRu-1-P) into 2,3-diketo-5-methylthiopentyl-1-phosphate (DK-MTP-1-P). The sequence is that of Methylthioribulose-1-phosphate dehydratase from Aspergillus flavus (strain ATCC 200026 / FGSC A1120 / IAM 13836 / NRRL 3357 / JCM 12722 / SRRC 167).